Consider the following 261-residue polypeptide: Probable electron transfer flavoprotein subunit beta (261 aa).

N-acetylserine is present on S2.

This sequence belongs to the ETF beta-subunit/FixA family. Heterodimer of an alpha and a beta subunit. Interacts with YFH1. Requires FAD as cofactor. AMP is required as a cofactor.

The protein resides in the mitochondrion matrix. Its function is as follows. The electron transfer flavoprotein serves as a specific electron acceptor for several dehydrogenases, including five acyl-CoA dehydrogenases, glutaryl-CoA and sarcosine dehydrogenase. It transfers the electrons to the main mitochondrial respiratory chain via ETF-ubiquinone oxidoreductase (ETF dehydrogenase). The chain is Probable electron transfer flavoprotein subunit beta (CIR1) from Saccharomyces cerevisiae (strain ATCC 204508 / S288c) (Baker's yeast).